The primary structure comprises 338 residues: F420-dependent glucose-6-phosphate dehydrogenase (338 aa).

Residue Asp40 coordinates coenzyme F420-(gamma-Glu)n. Catalysis depends on His41, which acts as the Proton donor. Coenzyme F420-(gamma-Glu)n is bound by residues Thr77 and 108–109 (TG). The active-site Proton acceptor is the Glu110. Coenzyme F420-(gamma-Glu)n contacts are provided by residues Asn113, 178 to 179 (GG), and 181 to 182 (VV). 4 residues coordinate substrate: Thr196, Lys199, Lys260, and Arg284.

Belongs to the F420-dependent glucose-6-phosphate dehydrogenase family. Homodimer.

The catalysed reaction is oxidized coenzyme F420-(gamma-L-Glu)(n) + D-glucose 6-phosphate + H(+) = 6-phospho-D-glucono-1,5-lactone + reduced coenzyme F420-(gamma-L-Glu)(n). Its function is as follows. Catalyzes the coenzyme F420-dependent oxidation of glucose 6-phosphate (G6P) to 6-phosphogluconolactone. This is F420-dependent glucose-6-phosphate dehydrogenase from Gordonia bronchialis (strain ATCC 25592 / DSM 43247 / BCRC 13721 / JCM 3198 / KCTC 3076 / NBRC 16047 / NCTC 10667) (Rhodococcus bronchialis).